A 175-amino-acid chain; its full sequence is ATP synthase subunit b (175 aa).

The chain crosses the membrane as a helical span at residues 13–33 (LLSPNPGLIFWTAVTFLLLLL).

This sequence belongs to the ATPase B chain family. F-type ATPases have 2 components, F(1) - the catalytic core - and F(0) - the membrane proton channel. F(1) has five subunits: alpha(3), beta(3), gamma(1), delta(1), epsilon(1). F(0) has four main subunits: a(1), b(2) and c(10-14). The alpha and beta chains form an alternating ring which encloses part of the gamma chain. F(1) is attached to F(0) by a central stalk formed by the gamma and epsilon chains, while a peripheral stalk is formed by the delta and b chains.

It localises to the cell inner membrane. Functionally, f(1)F(0) ATP synthase produces ATP from ADP in the presence of a proton or sodium gradient. F-type ATPases consist of two structural domains, F(1) containing the extramembraneous catalytic core and F(0) containing the membrane proton channel, linked together by a central stalk and a peripheral stalk. During catalysis, ATP synthesis in the catalytic domain of F(1) is coupled via a rotary mechanism of the central stalk subunits to proton translocation. In terms of biological role, component of the F(0) channel, it forms part of the peripheral stalk, linking F(1) to F(0). This chain is ATP synthase subunit b, found in Chloroherpeton thalassium (strain ATCC 35110 / GB-78).